Consider the following 124-residue polypeptide: MYRTRGFIYPAVLFVSALVLLIVNFVAAQYISRCMFEKETKELYIGENLLQNGVLLSIRHVLEERKGQEGTQQFLYGRVSYYIHDTSIKEQKEINLRVSTDSGTERTAQIVFDQKQKKLLRWTE.

An N-terminal signal peptide occupies residues 1 to 28 (MYRTRGFIYPAVLFVSALVLLIVNFVAA).

The transformation pili are flexible filaments, consisting mainly of the major pilin ComGC and smaller amounts of the minor pilins, including at least ComGD, ComGF and ComGG. Interacts with ComGC; the interaction is probably direct. Interacts with ComGD. Interacts with ComGF. May act as a link between ComGC, ComGD and ComGF. Homodimer; disulfide-linked. A minor fraction of ComGG is found as a disulfide-bonded homodimer. Post-translationally, partial processing of ComGG in competent cells requires ComC.

It localises to the cell membrane. The protein localises to the secreted. Functionally, required for formation of the type IV-like pilus (T4P) that plays a role in transformation. Transformation pili are dynamically extended and retracted, perhaps thereby promoting DNA uptake and transformation. Required for transformation and DNA binding. This is Competence protein ComGG (comGG) from Bacillus subtilis (strain 168).